The primary structure comprises 622 residues: Cilia- and flagella-associated protein 206 (622 aa).

Residues 570–592 form a disordered region; it reads SQVYPPKDTSTQSMREDSTGVPR.

This sequence belongs to the CFAP206 family.

The protein localises to the cytoplasm. The protein resides in the cytoskeleton. It is found in the cilium axoneme. It localises to the cilium basal body. Functionally, essential for sperm motility and is involved in the regulation of the beating frequency of motile cilia on the epithelial cells of the respiratory tract. Required for the establishment of radial spokes in sperm flagella. The protein is Cilia- and flagella-associated protein 206 of Homo sapiens (Human).